Here is an 82-residue protein sequence, read N- to C-terminus: Cytochrome c-551 (82 aa).

Residues Cys-12, Cys-15, His-16, and Met-61 each coordinate heme c.

Post-translationally, binds 1 heme c group covalently per subunit.

This is a prokaryotic monoheme cytochrome, unreactive with mitochondrial cytochrome C oxidase or reductase. It functions in nitrite and nitrate respiration in Pseudomonas, but it is also found in other bacteria. This Pseudomonas denitrificans protein is Cytochrome c-551.